The chain runs to 247 residues: Uridylate kinase (247 aa).

Residue K18 to G21 coordinates ATP. G60 contacts UMP. ATP-binding residues include G61 and R65. UMP-binding positions include D80 and T141–T148. Residues T168, Y174, and D177 each coordinate ATP.

This sequence belongs to the UMP kinase family. As to quaternary structure, homohexamer.

It localises to the cytoplasm. It catalyses the reaction UMP + ATP = UDP + ADP. It participates in pyrimidine metabolism; CTP biosynthesis via de novo pathway; UDP from UMP (UMPK route): step 1/1. With respect to regulation, inhibited by UTP. Its function is as follows. Catalyzes the reversible phosphorylation of UMP to UDP. The protein is Uridylate kinase of Ectopseudomonas mendocina (strain ymp) (Pseudomonas mendocina).